The chain runs to 139 residues: Actin-depolymerizing factor 1 (139 aa).

Residues 5–139 (SSGLAVNDEC…SLDIVRSRTN (135 aa)) enclose the ADF-H domain.

Belongs to the actin-binding proteins ADF family. In terms of tissue distribution, expressed in pollen.

In terms of biological role, actin-depolymerizing protein. Severs actin filaments (F-actin) and binds to actin monomers. The sequence is that of Actin-depolymerizing factor 1 (ADF1) from Zea mays (Maize).